The following is a 41-amino-acid chain: Large ribosomal subunit protein bL36 (41 aa).

The protein belongs to the bacterial ribosomal protein bL36 family.

The protein is Large ribosomal subunit protein bL36 of Bartonella tribocorum (strain CIP 105476 / IBS 506).